We begin with the raw amino-acid sequence, 89 residues long: Small ribosomal subunit protein uS15 (89 aa).

Belongs to the universal ribosomal protein uS15 family. In terms of assembly, part of the 30S ribosomal subunit. Forms a bridge to the 50S subunit in the 70S ribosome, contacting the 23S rRNA.

In terms of biological role, one of the primary rRNA binding proteins, it binds directly to 16S rRNA where it helps nucleate assembly of the platform of the 30S subunit by binding and bridging several RNA helices of the 16S rRNA. Forms an intersubunit bridge (bridge B4) with the 23S rRNA of the 50S subunit in the ribosome. The chain is Small ribosomal subunit protein uS15 from Shewanella sp. (strain ANA-3).